The chain runs to 57 residues: Potassium channel toxin alpha-KTx 26.3 (57 aa).

Residues 1-15 form the signal peptide; sequence MSGLSVFILIALVLS. The propeptide occupies 16 to 24; it reads VIIDVLNNS. Intrachain disulfides connect Cys-30–Cys-48, Cys-34–Cys-53, and Cys-38–Cys-55.

The protein belongs to the short scorpion toxin superfamily. Potassium channel inhibitor family. Alpha-KTx 26 subfamily. Expressed by the venom gland.

The protein localises to the secreted. Recombinant toxin that reversibly inhibits the potassium current of mKv1.3/KCNA3 channel stably expressed in COS7 cells (IC(50)=150 nM). This is Potassium channel toxin alpha-KTx 26.3 from Mesobuthus gibbosus (Mediterranean checkered scorpion).